The following is a 221-amino-acid chain: Max dimerization protein 1 (221 aa).

Residues 21-49 carry the Nuclear localization signal motif; sequence RREREAEHGYASMLPYNSKERDGLKRKSK. Disordered stretches follow at residues 28 to 67 and 176 to 202; these read HGYA…EKNR and DWSS…DEGY. In terms of domain architecture, bHLH spans 55–107; the sequence is NSRSTHNEMEKNRRAHLRLCLEKLKILVPLGPESNRHTTLSLLTRAKSHIKKL. A compositionally biased stretch (polar residues) spans 192-202; the sequence is SMQSICSDEGY.

Efficient DNA binding requires dimerization with another bHLH protein. Binds DNA as a heterodimer with MAX.

Its subcellular location is the nucleus. Functionally, transcriptional repressor. MAD binds with MAX to form a sequence-specific DNA-binding protein complex which recognizes the core sequence 5'-CAC[GA]TG-3'. MAD thus antagonizes MYC transcriptional activity by competing for MAX. The sequence is that of Max dimerization protein 1 (mxd1) from Xenopus tropicalis (Western clawed frog).